Consider the following 329-residue polypeptide: Phosphatidylcholine:ceramide cholinephosphotransferase 3 (329 aa).

At 1–26 (MAVPPVEMYSGSFWNRMRKPLPLRTQ) the chain is on the cytoplasmic side. The helical transmembrane segment at 27-47 (VIRFTVVFVIVSFILAVALQI) threads the bilayer. Residues 48–74 (THERMPDPKVTKPLPDLGFELLTKVPG) are Extracellular-facing. A helical membrane pass occupies residues 75 to 95 (MYVLADCCIGFLNILSVFTAF). Residues 96-147 (KLYLLHRHCVGSGEPELPCNIPGVSRFFLSVWLCKENCRIELRNIHTIAWIR) lie on the Cytoplasmic side of the membrane. Residues 148-168 (FITSYALLLLFRSAVIVMTSL) traverse the membrane as a helical segment. At 169–211 (PAPDDLCQNPPKIENPVKNVILTVLTAGAGSIHCGDLMYSGHT) the chain is on the extracellular side. A helical transmembrane segment spans residues 212-232 (VILTLHLMFHWIYGAMVHWSF). A topological domain (cytoplasmic) is located at residue Arg233. Residues 234–254 (PVVTVVAIFGYYCIVASRFHY) traverse the membrane as a helical segment. Residues 255 to 257 (TDD) are Extracellular-facing. The helical transmembrane segment at 258-278 (VLVAIYLTIATFIAVGHNADG) threads the bilayer. The Cytoplasmic segment spans residues 279–329 (APWQLQLFIRWWPCCGANSREVTEDSQPVMVAFKSEAAGQSSRKVVDERNH).

Belongs to the sphingomyelin synthase family.

The protein localises to the membrane. The catalysed reaction is an N-acylsphing-4-enine + a 1,2-diacyl-sn-glycero-3-phosphocholine = a sphingomyelin + a 1,2-diacyl-sn-glycerol. The enzyme catalyses an N-acylsphinganine + a 1,2-diacyl-sn-glycero-3-phosphocholine = an N-acylsphinganine-1-phosphocholine + a 1,2-diacyl-sn-glycerol. It catalyses the reaction an N-acylsphing-4-enine + a 1,2-diacyl-sn-glycero-3-phosphoethanolamine = an N-acylsphing-4-enine 1-phosphoethanolamine + a 1,2-diacyl-sn-glycerol. It carries out the reaction an N-acylsphinganine + a 1,2-diacyl-sn-glycero-3-phosphoethanolamine = an N-acylsphinganine-1-phosphoethanolamine + a 1,2-diacyl-sn-glycerol. Its function is as follows. Bifunctional sphingomyelin (SM)/ethanolamine phosphorylceramide (EPC) synthase with minimal inositol phosphorylceramide (IPC) synthase activity. Specificity is likely to be defined by residues in the lumenal catalytic domain that interact with the polar head groups of the phospholipid donors. SM is synthesized by both stages of the parasite life cycle, bloodstream forms (BSF) and procyclic forms (PCF), by transferring the phosphocholine from a 1,2-diacyl-sn-glycero-3-phosphocholine to an N-acylsphing-4-enine (ceramide) or an N-acylsphinganine (dihydroceramide). Similarly, EPC is synthesized by transferring phosphoethanolamine from a 1,2-diacyl-sn-glycero-3-phosphoethanolamine to ceramide or dihydroceramide by BSF and PCF, while IPC is confined to PCF. The ceramide/dihydroceramide ratios are skewed towards dihydroceramide in PCF parasites and ceramide in BSF parasites, this is likely due to differential expression and/or regulation of dihydroceramide desaturase, the enzyme responsible for converting dihydroceramide to ceramide. This Trypanosoma brucei brucei protein is Phosphatidylcholine:ceramide cholinephosphotransferase 3.